Here is a 285-residue protein sequence, read N- to C-terminus: Steroidogenic acute regulatory protein, mitochondrial (285 aa).

Residues 1 to 63 constitute a mitochondrion transit peptide; the sequence is MLLATFKLCA…RRGSLLGSQL (63 aa). Phosphoserine; by PKA occurs at positions 57 and 195. The START domain occupies 67-280; it reads LYSDQELAYI…LRKRLESCPA (214 aa).

As to quaternary structure, may interact with TSPO.

The protein resides in the mitochondrion. The enzyme catalyses cholesterol(in) = cholesterol(out). The protein operates within steroid metabolism; cholesterol metabolism. Its function is as follows. Plays a key role in steroid hormone synthesis by enhancing the metabolism of cholesterol into pregnenolone. Mediates the transfer of cholesterol from the outer mitochondrial membrane to the inner mitochondrial membrane where it is cleaved to pregnenolone. The polypeptide is Steroidogenic acute regulatory protein, mitochondrial (STAR) (Ovis aries (Sheep)).